Here is a 223-residue protein sequence, read N- to C-terminus: MKFAVLVFPGSNCDRDMFNAAIKSGVEAEYVDYRETSLSGFDGVLIPGGFSFGDYLRSGAMASVAPIISEVKRLAAEGKPVLGVCNGFQILTEIGLLPGALLHNDSHLFISRNEELEIVNNHTAFTNLYEQGEKVIYPVAHGEGHYYCTDEIYQQLKANNQIILKYVNNPNGSYDDIAGIVNEKGNVCGMMPHPERALETLLGTDSGVKLFEAMVKSWREQHV.

Residues 3–223 (FAVLVFPGSN…MVKSWREQHV (221 aa)) form the Glutamine amidotransferase type-1 domain. The active-site Nucleophile is C85. Residues H193 and E195 contribute to the active site.

In terms of assembly, part of the FGAM synthase complex composed of 1 PurL, 1 PurQ and 2 PurS subunits.

The protein localises to the cytoplasm. The enzyme catalyses N(2)-formyl-N(1)-(5-phospho-beta-D-ribosyl)glycinamide + L-glutamine + ATP + H2O = 2-formamido-N(1)-(5-O-phospho-beta-D-ribosyl)acetamidine + L-glutamate + ADP + phosphate + H(+). It catalyses the reaction L-glutamine + H2O = L-glutamate + NH4(+). It functions in the pathway purine metabolism; IMP biosynthesis via de novo pathway; 5-amino-1-(5-phospho-D-ribosyl)imidazole from N(2)-formyl-N(1)-(5-phospho-D-ribosyl)glycinamide: step 1/2. In terms of biological role, part of the phosphoribosylformylglycinamidine synthase complex involved in the purines biosynthetic pathway. Catalyzes the ATP-dependent conversion of formylglycinamide ribonucleotide (FGAR) and glutamine to yield formylglycinamidine ribonucleotide (FGAM) and glutamate. The FGAM synthase complex is composed of three subunits. PurQ produces an ammonia molecule by converting glutamine to glutamate. PurL transfers the ammonia molecule to FGAR to form FGAM in an ATP-dependent manner. PurS interacts with PurQ and PurL and is thought to assist in the transfer of the ammonia molecule from PurQ to PurL. The polypeptide is Phosphoribosylformylglycinamidine synthase subunit PurQ (Staphylococcus aureus (strain bovine RF122 / ET3-1)).